The following is a 279-amino-acid chain: MNLPVATALFTPSWHAELELAYARFGDCTRPTRRRHLGPLRVQKHLYAEGPEVCQHIIVHPPGGIAGGDRLDISARVAQGAWAQITSPGAAKWYRAAGPAYQSLNLHVADGATLEWLPQETIVYSAAQAELTTSIELEGDARLFYWDVVALGRPASGERFDLGHFQAHLDIRRDGRLLWHERQRIVGADGLLDSPIGLDGHPVFATLLVTGEIDAELLERCRSLGHEVRGDLTQLPGLLVARCLASEALLARAWLIDLWRLLRPALLGREALPPRIWNT.

Belongs to the UreD family. As to quaternary structure, ureD, UreF and UreG form a complex that acts as a GTP-hydrolysis-dependent molecular chaperone, activating the urease apoprotein by helping to assemble the nickel containing metallocenter of UreC. The UreE protein probably delivers the nickel.

Its subcellular location is the cytoplasm. In terms of biological role, required for maturation of urease via the functional incorporation of the urease nickel metallocenter. This is Urease accessory protein UreD from Pseudomonas fluorescens (strain Pf0-1).